A 132-amino-acid polypeptide reads, in one-letter code: SLSHEKYYALGSGPARAMAAKIKDGNEEPVEELYKELGYRDSFDSTVLVIENDAVPPPAIVEKVAAACKVDPGKLTVIVTPTSSLAGGLQVVARVLEVAMHKAHALHFPLENIVDGFGSAPLCPPHPNFVKA.

It belongs to the MCH family.

It is found in the cytoplasm. It catalyses the reaction 5,10-methenyl-5,6,7,8-tetrahydromethanopterin + H2O = N(5)-formyl-5,6,7,8-tetrahydromethanopterin + H(+). It functions in the pathway one-carbon metabolism; formaldehyde degradation; formate from formaldehyde (H(4)MPT route): step 3/5. Its function is as follows. Catalyzes the hydrolysis of methenyl-H(4)MPT(+) to 5-formyl-H(4)MPT. This is Methenyltetrahydromethanopterin cyclohydrolase (mch) from Methylomicrobium album (Methylobacter albus).